The sequence spans 1469 residues: Protein BCL9 homolog (1469 aa).

Polar residues predominate over residues 1–16 (MLSTTMPRSPTQQQPQ). Disordered stretches follow at residues 1–131 (MLST…NVSA), 161–187 (SNKA…KEEP), 200–222 (EERE…NAQD), 422–442 (ENSK…QSDP), and 454–474 (GGSS…DSIS). Position 9 is a phosphoserine (serine 9). At threonine 11 the chain carries Phosphothreonine. Residues 17 to 34 (PNSDASSTSASGSNPGAA) show a composition bias toward low complexity. Polar residues-rich tracts occupy residues 40-60 (SAAS…TLSP) and 90-113 (SGNN…NSCL). Residues 116 to 130 (SPQNSSEHSNSSNVS) are compositionally biased toward low complexity. Serine 206 carries the post-translational modification Phosphoserine. Threonine 208 carries the post-translational modification Phosphothreonine. Serine 210 is subject to Phosphoserine. 2 stretches are compositionally biased toward polar residues: residues 422–438 (ENSK…SFVD) and 455–474 (GSSN…DSIS). The segment at 511–555 (SLQGVKVPDENLTPQQRQHREEQLAKIKKMNQFLFPENENSVGAN) is ARM-binding. Disordered regions lie at residues 728–830 (GGKP…TSTV), 844–913 (CFQA…RSPV), and 961–991 (QASA…PPPN). Low complexity predominate over residues 731–745 (PRQVTGTVVPQQQTP). Polar residues predominate over residues 770–781 (IQRSASVPIATQ). Residues 782 to 796 (SPNPSSPNNLSLPSP) show a composition bias toward low complexity. 2 stretches are compositionally biased toward polar residues: residues 806–830 (PTNS…TSTV) and 844–880 (CFQA…TPLS). Phosphoserine occurs at positions 883, 905, and 911. A compositionally biased stretch (polar residues) spans 904-913 (PSPQGQRSPV).

It belongs to the BCL9 family. Binds to ARM and PYGO.

Its subcellular location is the nucleus. Involved in signal transduction through the Wnt pathway. This Drosophila melanogaster (Fruit fly) protein is Protein BCL9 homolog (lgs).